Reading from the N-terminus, the 456-residue chain is Molybdate transporter 1 (456 aa).

9 helical membrane passes run 67–87 (LIFTGIYNAITGAVYGVPMPV), 110–130 (IMAAGICTGGILFVLGISGLM), 133–153 (VFNIIPLSVVRGIQLSQGLAF), 177–197 (PWLGLDGLVLALVCVLFIVLV), 225–245 (VIANVPSALLIFLLGVVLAFI), 309–329 (AASVSMTVGLMNMVGCWFGAM), 354–374 (LLGVAKLVLGLVLGGSLVGIL), 377–397 (FPVGVLGALLLFAGVELAMAA), and 417–437 (LGSNAAIGFVAGDLLYVVLWM).

It belongs to the SLC26A/SulP transporter (TC 2.A.53) family. In terms of tissue distribution, strongly expressed in roots. Detected in the vascular tissues of hypocotyls, in petioles and vascular tissues of cotyledons and leaves, in mesophyll cells, stamen, sepals and siliques.

Its subcellular location is the cell membrane. It localises to the endomembrane system. The protein localises to the mitochondrion membrane. With respect to regulation, not inhibited by sulfate. Functionally, high affinity molybdate transporter. Unable to transport sulfate. This is Molybdate transporter 1 (MOT1) from Arabidopsis thaliana (Mouse-ear cress).